The chain runs to 779 residues: Transcription activator of gluconeogenesis BDCG_02812 (779 aa).

Residues 1-70 form a disordered region; the sequence is MTASTRNGSP…NAKDPLRPRR (70 aa). Residues 25–61 show a composition bias toward polar residues; the sequence is KSMTTTPANPPETKSQTNGKGSGTAQSSQKPASTSAN. A DNA-binding region (zn(2)-C6 fungal-type) is located at residues 77–105; the sequence is CFACQRAHLTCGDERPCQRCIKRGLQDAC. 6 disordered regions span residues 135-163, 202-239, 285-344, 401-421, 559-590, and 655-732; these read QANTTRNIPNQRGNASNSNSNKVSRQSVS, SVFHAQSPSSTQNFDLSSNPQTQNLSSAMSQTASSVSG, GAGD…ANPR, TNLMHPTNTPQQSRISTPGLK, GSSLSSASSVRGSSTFTPRNNNTHNSIDPHTG, and FHGK…QTWG. A compositionally biased stretch (polar residues) spans 202-226; it reads SVFHAQSPSSTQNFDLSSNPQTQNL. The segment covering 227 to 238 has biased composition (low complexity); that stretch reads SSAMSQTASSVS. 3 stretches are compositionally biased toward polar residues: residues 291-322, 333-344, and 401-416; these read PSDSATQRGSIGRSSGTFTAQNFGDSANNQSP, WNPTGQGQANPR, and TNLMHPTNTPQQSRIS. Residues 560–572 are compositionally biased toward low complexity; that stretch reads SSLSSASSVRGSS. Residues 573-586 are compositionally biased toward polar residues; the sequence is TFTPRNNNTHNSID. Residues 672–719 are compositionally biased toward low complexity; the sequence is TGTTTSGDVATTTATGTSTSNGANANTNGNNTNPNDPSSAASSSASSA. Polar residues predominate over residues 720-729; that stretch reads LQGPQQSPRQ.

This sequence belongs to the ERT1/acuK family.

It is found in the nucleus. In terms of biological role, transcription factor which regulates nonfermentable carbon utilization. Activator of gluconeogenetic genes. The polypeptide is Transcription activator of gluconeogenesis BDCG_02812 (Ajellomyces dermatitidis (strain ER-3 / ATCC MYA-2586) (Blastomyces dermatitidis)).